The primary structure comprises 108 residues: Mitochondrial pyruvate carrier 3 (108 aa).

A run of 3 helical transmembrane segments spans residues 19–35, 51–67, and 74–90; these read IHFWAPTFKWGISIANI, IVITGTGLVWSRYSTVI, and LFSVSLGMAVTGIYQLT.

The protein belongs to the mitochondrial pyruvate carrier (MPC) (TC 2.A.105) family. As to expression, abundant in leaf and particularly in the guard cells.

It localises to the mitochondrion. It is found in the mitochondrion inner membrane. Mediates the uptake of pyruvate into mitochondria. Negatively regulates ABA-induced guard cell signaling and mediates drought stress responses. The chain is Mitochondrial pyruvate carrier 3 from Arabidopsis thaliana (Mouse-ear cress).